Here is a 483-residue protein sequence, read N- to C-terminus: PAT complex subunit CCDC47 (483 aa).

Residues 1–20 (MKGFHAFCVILLIFGSVSEA) form the signal peptide. The Cytoplasmic segment spans residues 21–135 (KFDDFEDEED…PAHLQNSWES (115 aa)). Positions 44-118 (DVAEDSVTES…PDTSSSKSKD (75 aa)) are disordered. The span at 60 to 104 (TEDDEDETTVELEGQDESQEGDFEDADTQEGDTESEPYDDEEFEG) shows a compositional bias: acidic residues. The segment covering 105–118 (YEDKPDTSSSKSKD) has biased composition (basic and acidic residues). Residues 136–156 (YYLEILMVTGLLAYIMNYIIG) traverse the membrane as a helical segment. Over 157 to 483 (KNKNSRLAQA…KMKQIKVKAM (327 aa)) the chain is Lumenal. N178 carries an N-linked (GlcNAc...) asparagine glycan. The tract at residues 424 to 483 (QRQEAAQSRREEKKRAEKERIMNEEDPEKQRRLEEAALRREQKKLEKKQMKMKQIKVKAM) is disordered. Basic and acidic residues predominate over residues 430-472 (QSRREEKKRAEKERIMNEEDPEKQRRLEEAALRREQKKLEKKQ). Residues 450 to 483 (PEKQRRLEEAALRREQKKLEKKQMKMKQIKVKAM) are a coiled coil. Residues 473–483 (MKMKQIKVKAM) show a composition bias toward basic residues.

This sequence belongs to the CCDC47 family. As to quaternary structure, component of the PAT complex, composed of WDR83OS/Asterix and CCDC47. The PAT complex is part of the multi-pass translocon (MPT) complex, composed of three subcomplexes, the GEL complex (composed of RAB5IF/OPTI and TMCO1), the BOS complex (composed of NCLN/Nicalin, NOMO1 and TMEM147) and the PAT complex (composed of WDR83OS/Asterix and CCDC47). The MPT complex associates with the SEC61 complex. Interacts with VCP, HSPA5, DERL1, DERL2 and SELENOS.

Its subcellular location is the endoplasmic reticulum membrane. It is found in the rough endoplasmic reticulum membrane. Functionally, component of the multi-pass translocon (MPT) complex that mediates insertion of multi-pass membrane proteins into the lipid bilayer of membranes. The MPT complex takes over after the SEC61 complex: following membrane insertion of the first few transmembrane segments of proteins by the SEC61 complex, the MPT complex occludes the lateral gate of the SEC61 complex to promote insertion of subsequent transmembrane regions. Within the MPT complex, the PAT subcomplex sequesters any highly polar regions in the transmembrane domains away from the non-polar membrane environment until they can be buried in the interior of the fully assembled protein. Within the PAT subcomplex, CCDC47 occludes the lateral gate of the SEC61 complex. Involved in the regulation of calcium ion homeostasis in the ER. Required for proper protein degradation via the ERAD (ER-associated degradation) pathway. Has an essential role in the maintenance of ER organization during embryogenesis. This is PAT complex subunit CCDC47 (CCDC47) from Bos taurus (Bovine).